The following is a 338-amino-acid chain: Clathrin light chain 1 (338 aa).

The segment at 1 to 111 (MATFDDGDFP…NEMREEGFQR (111 aa)) is disordered. 2 stretches are compositionally biased toward polar residues: residues 29-47 (SEAQQPPTQHQSGGFSSFN) and 61-73 (SSPNHDFSSPFES). Residues 102–111 (NEMREEGFQR) show a composition bias toward basic and acidic residues. The interval 102-163 (NEMREEGFQR…TIETNKTDNR (62 aa)) is involved in binding clathrin heavy chain. Residues 122–142 (LEEKEKKEKEMRNQIITEAED) are a coiled coil. The interval 192 to 338 (IPREVPNIEK…VTEAEGTKAE (147 aa)) is disordered. Over residues 197-212 (PNIEKKRGKKDPDKKP) the composition is skewed to basic and acidic residues. The segment covering 241 to 253 (NPPPHMMPPPPPA) has biased composition (pro residues). Basic and acidic residues predominate over residues 254-304 (KDAKDGKDAKDGKDAKTGKDGKDAKGGKDAKDLKDGKPADPKVTEEKRPSP).

Belongs to the clathrin light chain family. Clathrin coats are formed from molecules containing 3 heavy chains and 3 light chains.

It is found in the cytoplasmic vesicle membrane. It localises to the membrane. The protein resides in the coated pit. In terms of biological role, clathrin is the major protein of the polyhedral coat of coated pits and vesicles. The sequence is that of Clathrin light chain 1 from Arabidopsis thaliana (Mouse-ear cress).